The sequence spans 338 residues: GTPase Obg (338 aa).

Positions 1 to 159 constitute an Obg domain; that stretch reads MQFIDQAEIE…RRIRLELKLL (159 aa). The region spanning 160 to 328 is the OBG-type G domain; it reads AEVGIIGLPN…MLQATWEQLD (169 aa). GTP is bound by residues 166–173, 191–195, 213–216, 280–283, and 309–311; these read GLPNAGKS, FTTLI, DIPG, NKLD, and SAV. Mg(2+) is bound by residues S173 and T193.

This sequence belongs to the TRAFAC class OBG-HflX-like GTPase superfamily. OBG GTPase family. As to quaternary structure, monomer. Requires Mg(2+) as cofactor.

It is found in the cytoplasm. Functionally, an essential GTPase which binds GTP, GDP and possibly (p)ppGpp with moderate affinity, with high nucleotide exchange rates and a fairly low GTP hydrolysis rate. Plays a role in control of the cell cycle, stress response, ribosome biogenesis and in those bacteria that undergo differentiation, in morphogenesis control. This chain is GTPase Obg, found in Gloeothece citriformis (strain PCC 7424) (Cyanothece sp. (strain PCC 7424)).